The sequence spans 258 residues: Spindlin-3 (258 aa).

Residues 1–23 (MKTPFGKAAAGQRSRTGAGHGSV) are disordered. Tudor-like domain stretches follow at residues 50–99 (VGCR…LELH), 129–178 (VGKA…YQLL), and 210–255 (VGKQ…YDLV). Histone H3K4me3 and H3R8me2a binding regions lie at residues Glu138 and 246–248 (DFH).

It belongs to the SPIN/STSY family. In terms of assembly, interacts with C11orf84/SPINDOC.

Functionally, exhibits H3K4me3-binding activity. In Homo sapiens (Human), this protein is Spindlin-3 (SPIN3).